Consider the following 226-residue polypeptide: Ribosomal RNA small subunit methyltransferase Nep1 (226 aa).

Residues Gly-176, Gly-181, and 197 to 202 (IYEESL) each bind S-adenosyl-L-methionine.

It belongs to the class IV-like SAM-binding methyltransferase superfamily. RNA methyltransferase NEP1 family. As to quaternary structure, homodimer.

The catalysed reaction is a pseudouridine in rRNA + S-adenosyl-L-methionine = an N(1)-methylpseudouridine in rRNA + S-adenosyl-L-homocysteine + H(+). In terms of biological role, methyltransferase involved in ribosomal biogenesis. Specifically catalyzes the N1-methylation of the pseudouridine corresponding to position 914 in M.jannaschii 16S rRNA. This chain is Ribosomal RNA small subunit methyltransferase Nep1, found in Methanothrix thermoacetophila (strain DSM 6194 / JCM 14653 / NBRC 101360 / PT) (Methanosaeta thermophila).